A 205-amino-acid chain; its full sequence is Large ribosomal subunit protein uL3 (205 aa).

This sequence belongs to the universal ribosomal protein uL3 family. As to quaternary structure, part of the 50S ribosomal subunit. Forms a cluster with proteins L14 and L19.

Functionally, one of the primary rRNA binding proteins, it binds directly near the 3'-end of the 23S rRNA, where it nucleates assembly of the 50S subunit. This chain is Large ribosomal subunit protein uL3, found in Parabacteroides distasonis (strain ATCC 8503 / DSM 20701 / CIP 104284 / JCM 5825 / NCTC 11152).